Consider the following 348-residue polypeptide: Tetraacyldisaccharide 4'-kinase (348 aa).

50–57 (TMGGTGKT) contributes to the ATP binding site.

This sequence belongs to the LpxK family.

It carries out the reaction a lipid A disaccharide + ATP = a lipid IVA + ADP + H(+). It participates in glycolipid biosynthesis; lipid IV(A) biosynthesis; lipid IV(A) from (3R)-3-hydroxytetradecanoyl-[acyl-carrier-protein] and UDP-N-acetyl-alpha-D-glucosamine: step 6/6. Functionally, transfers the gamma-phosphate of ATP to the 4'-position of a tetraacyldisaccharide 1-phosphate intermediate (termed DS-1-P) to form tetraacyldisaccharide 1,4'-bis-phosphate (lipid IVA). The chain is Tetraacyldisaccharide 4'-kinase from Desulfotalea psychrophila (strain LSv54 / DSM 12343).